Reading from the N-terminus, the 63-residue chain is Large ribosomal subunit protein uL30 (63 aa).

It belongs to the universal ribosomal protein uL30 family. In terms of assembly, part of the 50S ribosomal subunit.

This is Large ribosomal subunit protein uL30 from Xanthomonas campestris pv. campestris (strain 8004).